The following is a 380-amino-acid chain: Glucose-1-phosphate adenylyltransferase (380 aa).

Alpha-D-glucose 1-phosphate-binding positions include Gly-164, 179–180 (EK), and Ser-190.

The protein belongs to the bacterial/plant glucose-1-phosphate adenylyltransferase family. In terms of assembly, homotetramer.

It carries out the reaction alpha-D-glucose 1-phosphate + ATP + H(+) = ADP-alpha-D-glucose + diphosphate. It participates in glycan biosynthesis; glycogen biosynthesis. Functionally, involved in the biosynthesis of ADP-glucose, a building block required for the elongation reactions to produce glycogen. Catalyzes the reaction between ATP and alpha-D-glucose 1-phosphate (G1P) to produce pyrophosphate and ADP-Glc. The protein is Glucose-1-phosphate adenylyltransferase of Streptococcus pneumoniae (strain Hungary19A-6).